Reading from the N-terminus, the 435-residue chain is MTTFSPREIVSELDRYIIGQHDAKRAVAIALRNRWRRQQLDPSLRDEVMPKNILMIGPTGVGKTEISRRLAKLAGAPFIKVEATKFTEVGYVGRDVEQIIRDLVEVGIGLMREKKRAEVQAKAHVSAEERVLDALVGTTASPATRENFRKKLRDGELDDKEIDIEVADAGSGMGGFEIPGMPGANIGVLNLSEMFGKAMGGRTKKVRTTVKASYTDLIRDESDKLIDNEVIQREAVRATENDGIVFLDEIDKIAARDGGMGAGVSREGVQRDLLPLVEGTTVSTKYGPVKTDHILFIASGAFHVSKPSDLLPELQGRLPIRVELRPLNKEDFRRILTETEASLIRQYRALMETENLNLDFTDDAIDALADVAVHLNSSVENIGARRLQTVMERVLDDISYNAPDRAGAAITIDAAYVREHVGDLAQNTDLSRFIL.

Residues Ile-18, 60–65 (GVGKTE), Asp-248, Glu-313, and Arg-385 contribute to the ATP site.

This sequence belongs to the ClpX chaperone family. HslU subfamily. A double ring-shaped homohexamer of HslV is capped on each side by a ring-shaped HslU homohexamer. The assembly of the HslU/HslV complex is dependent on binding of ATP.

Its subcellular location is the cytoplasm. Its function is as follows. ATPase subunit of a proteasome-like degradation complex; this subunit has chaperone activity. The binding of ATP and its subsequent hydrolysis by HslU are essential for unfolding of protein substrates subsequently hydrolyzed by HslV. HslU recognizes the N-terminal part of its protein substrates and unfolds these before they are guided to HslV for hydrolysis. The protein is ATP-dependent protease ATPase subunit HslU of Rhizobium etli (strain ATCC 51251 / DSM 11541 / JCM 21823 / NBRC 15573 / CFN 42).